An 842-amino-acid polypeptide reads, in one-letter code: Elongation factor 2 (842 aa).

Residues 17–346 (TNVRNMSVIA…MIVMHLPSPV (330 aa)) enclose the tr-type G domain. GTP contacts are provided by residues 26–33 (AHVDHGKS), 158–161 (NKVD), and 213–215 (SGL). Position 699 is a diphthamide (His699).

It belongs to the TRAFAC class translation factor GTPase superfamily. Classic translation factor GTPase family. EF-G/EF-2 subfamily.

It is found in the cytoplasm. It carries out the reaction GTP + H2O = GDP + phosphate + H(+). Its function is as follows. Catalyzes the GTP-dependent ribosomal translocation step during translation elongation. During this step, the ribosome changes from the pre-translocational (PRE) to the post-translocational (POST) state as the newly formed A-site-bound peptidyl-tRNA and P-site-bound deacylated tRNA move to the P and E sites, respectively. Catalyzes the coordinated movement of the two tRNA molecules, the mRNA and conformational changes in the ribosome. This chain is Elongation factor 2 (EFT1), found in Candida glabrata (strain ATCC 2001 / BCRC 20586 / JCM 3761 / NBRC 0622 / NRRL Y-65 / CBS 138) (Yeast).